Reading from the N-terminus, the 367-residue chain is Putative heat shock 70 kDa protein 7 (367 aa).

This sequence belongs to the heat shock protein 70 family.

In Homo sapiens (Human), this protein is Putative heat shock 70 kDa protein 7 (HSPA7).